The chain runs to 33 residues: Brevinin-2Ef (33 aa).

An intrachain disulfide couples C27 to C33.

In terms of tissue distribution, expressed by the skin glands.

It localises to the secreted. In terms of biological role, shows antibacterial activity against representative Gram-negative and Gram-positive bacterial species, and hemolytic activity. In Pelophylax ridibundus (Marsh frog), this protein is Brevinin-2Ef.